We begin with the raw amino-acid sequence, 274 residues long: MQMKRTAFFISDGTGITAETLGQSLLAQFENISFVKLTRPYIDTEEKARAMVQQINNAAESDGARPIIFDTIVNRDIRAVLAQSNGFMIDIFATFLSPLEQELSADSSYSVGKSHSIGHNSNYMDRIEAVNFALDNDDGARTHYYDKADLILVGVSRCGKTPTCLYMALQYGIRAANYPLTEEDMERLQLPNALKQYKHKLFGLTIDPDRLTAIRNERKPNSRYASFAQCEFEVREVESLFRRENIAYINSTHFSVEEISAKILVEKGVERRFK.

An ADP-binding site is contributed by 154–161 (GVSRCGKT).

The protein belongs to the pyruvate, phosphate/water dikinase regulatory protein family. PSRP subfamily.

It carries out the reaction [pyruvate, water dikinase] + ADP = [pyruvate, water dikinase]-phosphate + AMP + H(+). The enzyme catalyses [pyruvate, water dikinase]-phosphate + phosphate + H(+) = [pyruvate, water dikinase] + diphosphate. Functionally, bifunctional serine/threonine kinase and phosphorylase involved in the regulation of the phosphoenolpyruvate synthase (PEPS) by catalyzing its phosphorylation/dephosphorylation. This is Putative phosphoenolpyruvate synthase regulatory protein from Pseudomonas aeruginosa (strain LESB58).